The chain runs to 512 residues: D-alanine--D-alanyl carrier protein ligase (512 aa).

Threonine 152 to serine 153 lines the ATP pocket. Aspartate 199 lines the D-alanine pocket. An ATP-binding site is contributed by asparagine 294–threonine 299. Valine 303 contributes to the D-alanine binding site. Residues aspartate 385, tyrosine 397 to arginine 400, and lysine 499 each bind ATP. Lysine 499 contributes to the D-alanine binding site.

Belongs to the ATP-dependent AMP-binding enzyme family. DltA subfamily.

Its subcellular location is the cytoplasm. It catalyses the reaction holo-[D-alanyl-carrier protein] + D-alanine + ATP = D-alanyl-[D-alanyl-carrier protein] + AMP + diphosphate. Its pathway is cell wall biogenesis; lipoteichoic acid biosynthesis. Catalyzes the first step in the D-alanylation of lipoteichoic acid (LTA), the activation of D-alanine and its transfer onto the D-alanyl carrier protein (Dcp) DltC. In an ATP-dependent two-step reaction, forms a high energy D-alanyl-AMP intermediate, followed by transfer of the D-alanyl residue as a thiol ester to the phosphopantheinyl prosthetic group of the Dcp. D-alanylation of LTA plays an important role in modulating the properties of the cell wall in Gram-positive bacteria, influencing the net charge of the cell wall. This Streptococcus pyogenes serotype M4 (strain MGAS10750) protein is D-alanine--D-alanyl carrier protein ligase.